Here is a 395-residue protein sequence, read N- to C-terminus: Elongation factor Tu (395 aa).

The tr-type G domain occupies 10-204; it reads KPHVNIGTIG…EVDAYIPTPE (195 aa). Residues 19–26 are G1; that stretch reads GHVDHGKT. 19–26 contributes to the GTP binding site; it reads GHVDHGKT. T26 serves as a coordination point for Mg(2+). The G2 stretch occupies residues 60–64; sequence GITIS. The G3 stretch occupies residues 81 to 84; that stretch reads DCPG. GTP-binding positions include 81 to 85 and 136 to 139; these read DCPGH and NKCD. A G4 region spans residues 136–139; that stretch reads NKCD. A G5 region spans residues 174–176; that stretch reads SAL.

It belongs to the TRAFAC class translation factor GTPase superfamily. Classic translation factor GTPase family. EF-Tu/EF-1A subfamily. In terms of assembly, monomer.

The protein resides in the cytoplasm. The catalysed reaction is GTP + H2O = GDP + phosphate + H(+). Its function is as follows. GTP hydrolase that promotes the GTP-dependent binding of aminoacyl-tRNA to the A-site of ribosomes during protein biosynthesis. This Bacillus anthracis (strain A0248) protein is Elongation factor Tu.